The chain runs to 367 residues: Putrescine/agmatine-binding protein (367 aa).

An N-terminal signal peptide occupies residues 1–19 (MKKVCALALSILTTIGATA).

The protein belongs to the bacterial solute-binding protein 1 family.

Its subcellular location is the periplasm. Binds putrescine and agmatine. This Pseudomonas aeruginosa (strain ATCC 15692 / DSM 22644 / CIP 104116 / JCM 14847 / LMG 12228 / 1C / PRS 101 / PAO1) protein is Putrescine/agmatine-binding protein.